Consider the following 86-residue polypeptide: DNA-directed RNA polymerase subunit Rpo6 (86 aa).

It belongs to the archaeal Rpo6/eukaryotic RPB6 RNA polymerase subunit family. Part of the RNA polymerase complex.

Its subcellular location is the cytoplasm. The enzyme catalyses RNA(n) + a ribonucleoside 5'-triphosphate = RNA(n+1) + diphosphate. DNA-dependent RNA polymerase (RNAP) catalyzes the transcription of DNA into RNA using the four ribonucleoside triphosphates as substrates. This is DNA-directed RNA polymerase subunit Rpo6 from Sulfurisphaera tokodaii (strain DSM 16993 / JCM 10545 / NBRC 100140 / 7) (Sulfolobus tokodaii).